We begin with the raw amino-acid sequence, 566 residues long: Lactase-like protein (566 aa).

Positions 1–20 (MKPVWVIILGWILLVPRVGT) are cleaved as a signal peptide. Residues 21–540 (AWRGPPEEAS…LLRHMHVASE (520 aa)) are Extracellular-facing. Residues N170 and N244 are each glycosylated (N-linked (GlcNAc...) asparagine). A helical membrane pass occupies residues 541–561 (IVVPTVCALSILTAALMLTLL). Topologically, residues 562 to 566 (LRRRG) are cytoplasmic.

It belongs to the glycosyl hydrolase 1 family. Klotho subfamily. In terms of assembly, may form dimers. In terms of tissue distribution, strongly expressed in the lens of the eye, where it localizes to the equatorial epithelium and outer layers of newly extending fiber cells (at protein level). May also be expressed in kidney and skin. However, another study suggests that expression is specific to eye and is minimal in other tissues.

The protein localises to the endoplasmic reticulum membrane. Its function is as follows. Plays a role in formation of the lens suture in the eye, which is important for normal optical properties of the lens. The chain is Lactase-like protein (Lctl) from Mus musculus (Mouse).